The sequence spans 85 residues: Turmerin (85 aa).

In terms of processing, the N-terminus is blocked.

Functionally, inhibition of trypsin. Has anticarcinogenic activity, prevents transformation of DMBA-treated JB6 cells. Has antipromoter activity, prevents promotion by tetradecanoyl phorbal acetate (TPA) in JB6 cells. Prevents tertiary butyl hydroperoxide-induced mutagenesis. Protects AT base pairs and shows antimutagenesis activity in TA102 and TA104 S.typhimurium mutagenesis tests. Inhibits paw edema formation induced by phospholipase A2 in Swiss Wistar mice. Prevents the release of arachidonate, the parent compound for the synthesis of prostaglandins and prostacyclins. Has antimalarial activity, kills P.falciparum. Has antivenom activity, nullifies the lethal effects of N.naja venom and inhibits phospholipase A2 present in N.naja venom. Has antifungal activity, inhibits cilia formation by A.niger. Is not toxic or allergenic. The polypeptide is Turmerin (Curcuma longa (Turmeric)).